The primary structure comprises 2704 residues: G surface protein, allelic form 168 (2704 aa).

A signal peptide spans 1–20 (MNNKFIIFSLLLALVASQTY). PSA repeat units lie at residues 112–165 (TLDS…NTCD), 172–231 (ATDK…RICD), 238–297 (TTDD…KTCA), 304–360 (TTNS…KTCA), 400–460 (TTND…DKTC), 468–523 (TTHD…KKQC), 530–590 (TTTH…KACS), 596–667 (FTTT…KSCA), 683–742 (FTFS…KTCA), 747–806 (TSHA…ATCA), 815–881 (DSDT…YALS), 929–994 (LTFA…AAEC), 1003–1061 (LDHS…FANC), 1069–1123 (LTNT…ACLT), 1141–1196 (LTNA…ACLT), 1214–1269 (LTNA…ACLT), 1287–1342 (LTDA…ACLT), 1360–1415 (LTNA…ACLT), 1433–1495 (LTDA…DVTC), 1503–1566 (LDHA…ATDC), 1576–1641 (ITYE…ATTC), 1684–1740 (NHTN…KTCD), 1750–1807 (DDTE…DLNC), 1817–1887 (DTHN…KSCT), 1893–1965 (TTTH…KSCA), 1974–2033 (DDDT…KSCD), 2070–2137 (ATDA…IKNC), 2145–2204 (TSEA…KDCQ), 2209–2274 (TTHA…YTSC), 2348–2419 (YTTH…QSCA), and 2424–2489 (TTHA…LTCA).

Its subcellular location is the cell membrane. In terms of biological role, this protein is the surface antigen or immobilization antigen of Paramecium primaurelia. In Paramecium primaurelia, this protein is G surface protein, allelic form 168 (168G).